The following is a 427-amino-acid chain: Proline--tRNA ligase (427 aa).

This sequence belongs to the class-II aminoacyl-tRNA synthetase family. ProS type 2 subfamily. As to quaternary structure, homodimer.

Its subcellular location is the cytoplasm. The enzyme catalyses tRNA(Pro) + L-proline + ATP = L-prolyl-tRNA(Pro) + AMP + diphosphate. Its function is as follows. Catalyzes the attachment of proline to tRNA(Pro) in a two-step reaction: proline is first activated by ATP to form Pro-AMP and then transferred to the acceptor end of tRNA(Pro). The chain is Proline--tRNA ligase from Rickettsia akari (strain Hartford).